Consider the following 231-residue polypeptide: MEVSMSLNALTRLPLKNTGRFEEVGLARHSLFSSRTACRETAVQQRRMVFVVEAKGKKGMAARQYQRTPPPMPKIEDDGNPRFVIFIRMANVYLWYPLSIIAGGTTAKIMVAAKDNLLGKYIYKDTIARNIAAVIYRDEKEIQKTAIKQHRVLRTATEFRYGYKLVENGNMRAALSTSDVIELPTQDQLKTVFDKVKDYFGDAKESFGKLSSLNPGSDEKTEETSDEKAKA.

The transit peptide at 1–39 (MEVSMSLNALTRLPLKNTGRFEEVGLARHSLFSSRTACR) directs the protein to the chloroplast. Residues 93–113 (YLWYPLSIIAGGTTAKIMVAA) traverse the membrane as a helical segment. The disordered stretch occupies residues 206-231 (SFGKLSSLNPGSDEKTEETSDEKAKA). The span at 217–231 (SDEKTEETSDEKAKA) shows a compositional bias: basic and acidic residues.

As to quaternary structure, interacts with psbB, psbC and LQY1, but not with psbA or psbD.

It localises to the plastid. The protein localises to the chloroplast thylakoid membrane. Functionally, involved in photoprotection. Forms a complex with LQY1 that is involved in the repair and reassembly cycle of the PSII-LHCII supercomplex under high-light conditions. May function in guiding the release of psbC from PSII core monomers. The chain is Protein HHL1, chloroplastic from Arabidopsis thaliana (Mouse-ear cress).